Reading from the N-terminus, the 280-residue chain is MITEFIDGLQQFHFLQNALITAIAIGIVAGAVGCFIILRGMSLMGDAISHAVLPGVALSFILGINFFIGAIVFGLLASILITYIKSNSIIKSDTAIGITFSSFLALGVILIGVAKSSTDLFHILFGNILAVQDQDMWMTIGVGVTVLLVICLLFRPLLLTSFDPVLAQSMGVRVKIYHYLLMVLLTLVSVTAMQSVGTILIVAMLITPAATAYLYANSLWSMMLLSSSLGALASILGLFIGYSLNIAVGSCIVLTSAVFFLISFFIAPKQRKNKHALSSH.

8 consecutive transmembrane segments (helical) span residues 18-38, 61-81, 94-114, 139-159, 174-194, 196-216, 222-242, and 246-266; these read ALITAIAIGIVAGAVGCFIIL, ILGINFFIGAIVFGLLASILI, TAIGITFSSFLALGVILIGVA, TIGVGVTVLLVICLLFRPLLL, VKIYHYLLMVLLTLVSVTAMQ, VGTILIVAMLITPAATAYLYA, MMLLSSSLGALASILGLFIGY, and IAVGSCIVLTSAVFFLISFFI.

It belongs to the ABC-3 integral membrane protein family.

The protein resides in the cell membrane. Functionally, part of an ABC transporter complex involved in manganese import. In Streptococcus parasanguinis, this protein is Manganese import system permease protein ScaB.